Here is a 104-residue protein sequence, read N- to C-terminus: L-rhamnose mutarotase (104 aa).

Y18 is a binding site for substrate. H22 serves as the catalytic Proton donor. Residues Y41 and 76–77 (WW) each bind substrate.

It belongs to the rhamnose mutarotase family. In terms of assembly, homodimer.

Its subcellular location is the cytoplasm. It carries out the reaction alpha-L-rhamnose = beta-L-rhamnose. The protein operates within carbohydrate metabolism; L-rhamnose metabolism. In terms of biological role, involved in the anomeric conversion of L-rhamnose. In Shouchella clausii (strain KSM-K16) (Alkalihalobacillus clausii), this protein is L-rhamnose mutarotase.